An 87-amino-acid chain; its full sequence is Omega-lycotoxin-Am1c (87 aa).

The N-terminal stretch at methionine 1 to cysteine 17 is a signal peptide. Positions glutamine 18–arginine 40 are excised as a propeptide. 4 disulfide bridges follow: cysteine 44–cysteine 59, cysteine 51–cysteine 64, cysteine 58–cysteine 84, and cysteine 66–cysteine 82.

The protein belongs to the neurotoxin omega-lctx family. As to expression, expressed by the venom gland.

It localises to the secreted. Functionally, modulates Cav2.1/CACNA1A voltage-gated calcium channels (P/Q-type currents) in rat cerebellar Purkinje cells and hippocampal CA1-CA3 neurons. At saturating concentrations (&gt;10 nM) decelerates activation kinetics and slightly increases peak amplitude without affecting deactivation kinetics. In vivo, does not cause death when intravenously injected into mice. In rat models, through its activity on Cav2.1/CACNA1A, has an ameliorative effect on memory defects provoked by hyperstimulation of N-methyl-D-aspartate receptors (NMDARs) in the hippocampus. This Alopecosa marikovskyi (Wolf spider) protein is Omega-lycotoxin-Am1c.